The chain runs to 360 residues: Glycerol-1-phosphate dehydrogenase [NAD(P)+] (360 aa).

NAD(+)-binding positions include 108 to 112 and 130 to 133; these read GRVID and TAAS. D135 contributes to the substrate binding site. Residue S139 coordinates NAD(+). D182 lines the substrate pocket. The Zn(2+) site is built by D182 and H262. H266 serves as a coordination point for substrate. H278 contributes to the Zn(2+) binding site.

The protein belongs to the glycerol-1-phosphate dehydrogenase family. It depends on Zn(2+) as a cofactor.

Its subcellular location is the cytoplasm. It carries out the reaction sn-glycerol 1-phosphate + NAD(+) = dihydroxyacetone phosphate + NADH + H(+). The catalysed reaction is sn-glycerol 1-phosphate + NADP(+) = dihydroxyacetone phosphate + NADPH + H(+). The protein operates within membrane lipid metabolism; glycerophospholipid metabolism. Its function is as follows. Catalyzes the NAD(P)H-dependent reduction of dihydroxyacetonephosphate (DHAP or glycerone phosphate) to glycerol 1-phosphate (G1P). The G1P thus generated is used as the glycerophosphate backbone of phospholipids in the cellular membranes of Archaea. The protein is Glycerol-1-phosphate dehydrogenase [NAD(P)+] of Methanocorpusculum labreanum (strain ATCC 43576 / DSM 4855 / Z).